Here is a 344-residue protein sequence, read N- to C-terminus: Glycerol-3-phosphate dehydrogenase [NAD(P)+] (344 aa).

4 residues coordinate NADPH: Ser23, Trp24, Arg44, and Lys118. Sn-glycerol 3-phosphate is bound by residues Lys118, Gly147, and Thr149. An NADPH-binding site is contributed by Ala151. Positions 202, 255, 265, 266, and 267 each coordinate sn-glycerol 3-phosphate. The Proton acceptor role is filled by Lys202. NADPH is bound at residue Arg266. Glu292 serves as a coordination point for NADPH.

Belongs to the NAD-dependent glycerol-3-phosphate dehydrogenase family.

It localises to the cytoplasm. It catalyses the reaction sn-glycerol 3-phosphate + NAD(+) = dihydroxyacetone phosphate + NADH + H(+). It carries out the reaction sn-glycerol 3-phosphate + NADP(+) = dihydroxyacetone phosphate + NADPH + H(+). It participates in membrane lipid metabolism; glycerophospholipid metabolism. In terms of biological role, catalyzes the reduction of the glycolytic intermediate dihydroxyacetone phosphate (DHAP) to sn-glycerol 3-phosphate (G3P), the key precursor for phospholipid synthesis. The protein is Glycerol-3-phosphate dehydrogenase [NAD(P)+] of Nitrosococcus oceani (strain ATCC 19707 / BCRC 17464 / JCM 30415 / NCIMB 11848 / C-107).